The following is a 341-amino-acid chain: Ferrochelatase (341 aa).

2 residues coordinate Fe cation: H189 and E293.

Belongs to the ferrochelatase family.

The protein localises to the cytoplasm. It carries out the reaction heme b + 2 H(+) = protoporphyrin IX + Fe(2+). It functions in the pathway porphyrin-containing compound metabolism; protoheme biosynthesis; protoheme from protoporphyrin-IX: step 1/1. Functionally, catalyzes the ferrous insertion into protoporphyrin IX. In Pseudomonas fluorescens (strain Pf0-1), this protein is Ferrochelatase.